The following is a 580-amino-acid chain: Zinc finger protein 271 (580 aa).

C2H2-type zinc fingers lie at residues 78-100 (YNCD…QRTH), 104-126 (YECE…QRIH), 132-154 (YPCS…QRVH), 160-182 (YKCD…QRIH), 188-210 (YQCS…LRIH), 216-238 (YMCN…QRIH), 244-266 (YKCD…QRIH), 272-294 (YPCA…RRIH), 300-322 (YKCS…QRIH), 328-350 (YPCN…QRIH), 356-378 (YPCS…YRIH), 384-406 (YECD…QRIH), 412-434 (YPCN…QRVH), 440-462 (YTCN…QRVH), 468-490 (YHCS…HRVH), 496-518 (YACT…QRIH), 524-545 (YKCM…QRIH), and 551-573 (YPCA…QRVH).

Belongs to the krueppel C2H2-type zinc-finger protein family. As to expression, selectively expressed in adult testis.

Its subcellular location is the nucleus. In terms of biological role, may act to control gene activity during the pachytene stage of meiotic prophase. May function as a transcription activator. This chain is Zinc finger protein 271 (Znf271), found in Mus musculus (Mouse).